The following is a 462-amino-acid chain: Siroheme synthase (462 aa).

The segment at 1–203 is precorrin-2 dehydrogenase /sirohydrochlorin ferrochelatase; that stretch reads MEYLPLFANL…GKWEHAEKEI (203 aa). NAD(+) contacts are provided by residues 22 to 23 and 43 to 44; these read NV and DD. Residue S128 is modified to Phosphoserine. Residues 215–462 are uroporphyrinogen-III C-methyltransferase; it reads GNVALVGAGP…NWFGKIIKEQ (248 aa). P224 contributes to the S-adenosyl-L-methionine binding site. Residue D247 is the Proton acceptor of the active site. The active-site Proton donor is the K269. S-adenosyl-L-methionine-binding positions include 300–302, I305, 330–331, M383, and G412; these read GGD and TA.

The protein in the N-terminal section; belongs to the precorrin-2 dehydrogenase / sirohydrochlorin ferrochelatase family. It in the C-terminal section; belongs to the precorrin methyltransferase family.

It catalyses the reaction uroporphyrinogen III + 2 S-adenosyl-L-methionine = precorrin-2 + 2 S-adenosyl-L-homocysteine + H(+). The enzyme catalyses precorrin-2 + NAD(+) = sirohydrochlorin + NADH + 2 H(+). The catalysed reaction is siroheme + 2 H(+) = sirohydrochlorin + Fe(2+). It participates in cofactor biosynthesis; adenosylcobalamin biosynthesis; precorrin-2 from uroporphyrinogen III: step 1/1. Its pathway is cofactor biosynthesis; adenosylcobalamin biosynthesis; sirohydrochlorin from precorrin-2: step 1/1. The protein operates within porphyrin-containing compound metabolism; siroheme biosynthesis; precorrin-2 from uroporphyrinogen III: step 1/1. It functions in the pathway porphyrin-containing compound metabolism; siroheme biosynthesis; siroheme from sirohydrochlorin: step 1/1. It participates in porphyrin-containing compound metabolism; siroheme biosynthesis; sirohydrochlorin from precorrin-2: step 1/1. Multifunctional enzyme that catalyzes the SAM-dependent methylations of uroporphyrinogen III at position C-2 and C-7 to form precorrin-2 via precorrin-1. Then it catalyzes the NAD-dependent ring dehydrogenation of precorrin-2 to yield sirohydrochlorin. Finally, it catalyzes the ferrochelation of sirohydrochlorin to yield siroheme. This Baumannia cicadellinicola subsp. Homalodisca coagulata protein is Siroheme synthase.